The chain runs to 262 residues: Type III pantothenate kinase (262 aa).

12-19 contributes to the ATP binding site; that stretch reads DIGNTSIA. Substrate contacts are provided by residues Tyr-94 and 109–112; that span reads GSDV. The Proton acceptor role is filled by Asp-111. Asp-132 serves as a coordination point for K(+). Position 135 (Thr-135) interacts with ATP. Thr-187 serves as a coordination point for substrate.

It belongs to the type III pantothenate kinase family. In terms of assembly, homodimer. Requires NH4(+) as cofactor. The cofactor is K(+).

It is found in the cytoplasm. It catalyses the reaction (R)-pantothenate + ATP = (R)-4'-phosphopantothenate + ADP + H(+). Its pathway is cofactor biosynthesis; coenzyme A biosynthesis; CoA from (R)-pantothenate: step 1/5. Catalyzes the phosphorylation of pantothenate (Pan), the first step in CoA biosynthesis. This is Type III pantothenate kinase from Borreliella burgdorferi (strain ATCC 35210 / DSM 4680 / CIP 102532 / B31) (Borrelia burgdorferi).